A 329-amino-acid polypeptide reads, in one-letter code: Phenylalanine--tRNA ligase alpha subunit (329 aa).

Glu254 provides a ligand contact to Mg(2+).

This sequence belongs to the class-II aminoacyl-tRNA synthetase family. Phe-tRNA synthetase alpha subunit type 1 subfamily. Tetramer of two alpha and two beta subunits. The cofactor is Mg(2+).

Its subcellular location is the cytoplasm. The enzyme catalyses tRNA(Phe) + L-phenylalanine + ATP = L-phenylalanyl-tRNA(Phe) + AMP + diphosphate + H(+). This is Phenylalanine--tRNA ligase alpha subunit from Histophilus somni (strain 129Pt) (Haemophilus somnus).